The primary structure comprises 658 residues: DNA mismatch repair protein MutL (658 aa).

Basic and acidic residues predominate over residues 114–130; it reads RQEDSSHATQVKAEDGK. 2 disordered regions span residues 114 to 138 and 355 to 405; these read RQEDSSHATQVKAEDGKLSSPTAAA and PSEN…HSLS.

This sequence belongs to the DNA mismatch repair MutL/HexB family.

Its function is as follows. This protein is involved in the repair of mismatches in DNA. It is required for dam-dependent methyl-directed DNA mismatch repair. May act as a 'molecular matchmaker', a protein that promotes the formation of a stable complex between two or more DNA-binding proteins in an ATP-dependent manner without itself being part of a final effector complex. This chain is DNA mismatch repair protein MutL, found in Neisseria gonorrhoeae (strain ATCC 700825 / FA 1090).